The sequence spans 156 residues: Small ribosomal subunit protein uS7 (156 aa).

Belongs to the universal ribosomal protein uS7 family. As to quaternary structure, part of the 30S ribosomal subunit. Contacts proteins S9 and S11.

In terms of biological role, one of the primary rRNA binding proteins, it binds directly to 16S rRNA where it nucleates assembly of the head domain of the 30S subunit. Is located at the subunit interface close to the decoding center, probably blocks exit of the E-site tRNA. This Geobacillus stearothermophilus (Bacillus stearothermophilus) protein is Small ribosomal subunit protein uS7 (rpsG).